Consider the following 352-residue polypeptide: Alanine racemase (352 aa).

The active-site Proton acceptor; specific for D-alanine is Lys33. An N6-(pyridoxal phosphate)lysine modification is found at Lys33. A substrate-binding site is contributed by Arg129. Tyr250 acts as the Proton acceptor; specific for L-alanine in catalysis. Met298 provides a ligand contact to substrate.

This sequence belongs to the alanine racemase family. Pyridoxal 5'-phosphate is required as a cofactor.

It carries out the reaction L-alanine = D-alanine. The protein operates within amino-acid biosynthesis; D-alanine biosynthesis; D-alanine from L-alanine: step 1/1. Catalyzes the interconversion of L-alanine and D-alanine. May also act on other amino acids. The polypeptide is Alanine racemase (alr) (Neisseria gonorrhoeae (strain ATCC 700825 / FA 1090)).